We begin with the raw amino-acid sequence, 30 residues long: KEGYIVNYHTGCKYTCAKLGDNDYCLRECK.

One can recognise an LCN-type CS-alpha/beta domain in the interval 1–30 (KEGYIVNYHTGCKYTCAKLGDNDYCLRECK).

This sequence belongs to the long (4 C-C) scorpion toxin superfamily. Sodium channel inhibitor family. Beta subfamily. As to expression, expressed by the venom gland.

It localises to the secreted. Its function is as follows. Binds to sodium channels (Nav) and inhibits the inactivation of the activated channels, thereby blocking neuronal transmission. The chain is Neurotoxin II.22.5 from Centruroides tecomanus (Scorpion).